Here is a 1002-residue protein sequence, read N- to C-terminus: UPF0182 protein Mvan_1814 (1002 aa).

Transmembrane regions (helical) follow at residues 16–36, 61–81, 112–132, 174–194, 209–229, 258–278, and 286–306; these read VMIA…RLVD, LLLF…AMAL, LVGI…AQNY, FAAT…FGGI, IQLI…YWLD, KLIL…AIVL, and IGVV…PLVV. The disordered stretch occupies residues 891–958; that stretch reads LFGPGADATA…TGPTQLSAGK (68 aa). Residues 893–923 are compositionally biased toward low complexity; sequence GPGADATATGPAATEPPAGQAPQPQGNNQPP. Pro residues predominate over residues 937-950; the sequence is PQQPEVPVAVPPTG.

It belongs to the UPF0182 family.

Its subcellular location is the cell membrane. The protein is UPF0182 protein Mvan_1814 of Mycolicibacterium vanbaalenii (strain DSM 7251 / JCM 13017 / BCRC 16820 / KCTC 9966 / NRRL B-24157 / PYR-1) (Mycobacterium vanbaalenii).